Reading from the N-terminus, the 320-residue chain is tRNA(Ile)-lysidine synthase (320 aa).

33-38 (SGGPDS) contributes to the ATP binding site.

It belongs to the tRNA(Ile)-lysidine synthase family.

It is found in the cytoplasm. The enzyme catalyses cytidine(34) in tRNA(Ile2) + L-lysine + ATP = lysidine(34) in tRNA(Ile2) + AMP + diphosphate + H(+). Ligates lysine onto the cytidine present at position 34 of the AUA codon-specific tRNA(Ile) that contains the anticodon CAU, in an ATP-dependent manner. Cytidine is converted to lysidine, thus changing the amino acid specificity of the tRNA from methionine to isoleucine. This is tRNA(Ile)-lysidine synthase from Mycolicibacterium paratuberculosis (strain ATCC BAA-968 / K-10) (Mycobacterium paratuberculosis).